Consider the following 119-residue polypeptide: Large ribosomal subunit protein bL17 (119 aa).

Belongs to the bacterial ribosomal protein bL17 family. Part of the 50S ribosomal subunit. Contacts protein L32.

In Psychrobacter sp. (strain PRwf-1), this protein is Large ribosomal subunit protein bL17.